Consider the following 302-residue polypeptide: Nucleotide-binding protein BceJ2315_08000 (302 aa).

8-15 (GISGSGKS) contributes to the ATP binding site. 57-60 (DARS) provides a ligand contact to GTP.

The protein belongs to the RapZ-like family.

Functionally, displays ATPase and GTPase activities. The polypeptide is Nucleotide-binding protein BceJ2315_08000 (Burkholderia cenocepacia (strain ATCC BAA-245 / DSM 16553 / LMG 16656 / NCTC 13227 / J2315 / CF5610) (Burkholderia cepacia (strain J2315))).